Reading from the N-terminus, the 554-residue chain is Phospholipase B-like protein E (554 aa).

An N-terminal signal peptide occupies residues 1-19 (MKLFILLIVIVFLISNSYS). N-linked (GlcNAc...) asparagine glycans are attached at residues asparagine 113, asparagine 140, asparagine 231, asparagine 302, asparagine 340, and asparagine 546.

The protein belongs to the phospholipase B-like family.

It localises to the secreted. Functionally, probable phospholipase. The chain is Phospholipase B-like protein E (plbE) from Dictyostelium discoideum (Social amoeba).